We begin with the raw amino-acid sequence, 847 residues long: Phenylalanine--tRNA ligase beta subunit (847 aa).

Positions Phe-40 to Val-168 constitute a tRNA-binding domain. The B5 domain maps to Ala-426–Ser-501. Positions 479, 485, 488, and 489 each coordinate Mg(2+). In terms of domain architecture, FDX-ACB spans Ala-753 to Arg-846.

This sequence belongs to the phenylalanyl-tRNA synthetase beta subunit family. Type 1 subfamily. Tetramer of two alpha and two beta subunits. Requires Mg(2+) as cofactor.

The protein localises to the cytoplasm. The enzyme catalyses tRNA(Phe) + L-phenylalanine + ATP = L-phenylalanyl-tRNA(Phe) + AMP + diphosphate + H(+). The chain is Phenylalanine--tRNA ligase beta subunit from Leifsonia xyli subsp. xyli (strain CTCB07).